Consider the following 207-residue polypeptide: Dephospho-CoA kinase (207 aa).

Residues 4–203 (VIGLTGGIAS…EEGYIEKPNY (200 aa)) form the DPCK domain. An ATP-binding site is contributed by 12–17 (ASGKST).

This sequence belongs to the CoaE family.

The protein resides in the cytoplasm. The enzyme catalyses 3'-dephospho-CoA + ATP = ADP + CoA + H(+). It functions in the pathway cofactor biosynthesis; coenzyme A biosynthesis; CoA from (R)-pantothenate: step 5/5. In terms of biological role, catalyzes the phosphorylation of the 3'-hydroxyl group of dephosphocoenzyme A to form coenzyme A. The polypeptide is Dephospho-CoA kinase (Staphylococcus aureus (strain bovine RF122 / ET3-1)).